A 121-amino-acid polypeptide reads, in one-letter code: Small ribosomal subunit protein uS13 (121 aa).

Residues 92 to 121 are disordered; the sequence is HRMGLPCRGQKTKTNARTRKGPRRGAARRK. Positions 101-121 are enriched in basic residues; it reads QKTKTNARTRKGPRRGAARRK.

The protein belongs to the universal ribosomal protein uS13 family. As to quaternary structure, part of the 30S ribosomal subunit. Forms a loose heterodimer with protein S19. Forms two bridges to the 50S subunit in the 70S ribosome.

Functionally, located at the top of the head of the 30S subunit, it contacts several helices of the 16S rRNA. In the 70S ribosome it contacts the 23S rRNA (bridge B1a) and protein L5 of the 50S subunit (bridge B1b), connecting the 2 subunits; these bridges are implicated in subunit movement. Contacts the tRNAs in the A and P-sites. In Desulfotalea psychrophila (strain LSv54 / DSM 12343), this protein is Small ribosomal subunit protein uS13.